A 131-amino-acid chain; its full sequence is Transcriptional activator protein (131 aa).

The Nuclear localization signal motif lies at 13–28 (KAQHRIAKKRAVRRRR). Residues 33 to 52 (CGCSIYIHINCAKDGNGFTH) fold into a zinc finger. The disordered stretch occupies residues 78 to 131 (DVQXGGSTLHAHKDIPHTNPVQPQPEESTKSSQSVPELPSLDGIDSSFWDDIFE). The tract at residues 117 to 131 (SLDGIDSSFWDDIFE) is transactivation.

This sequence belongs to the geminiviridae transcriptional activator protein family. As to quaternary structure, monomer. Homodimer. Homooligomer. Self-interaction correlates with nuclear localization and efficient activation of transcription. Monomers suppress local silencing by interacting with and inactivating host adenosine kinase 2 (ADK2) in the cytoplasm. Interacts with and inhibits host SNF1 kinase. Binds to ssDNA. In terms of processing, phosphorylated.

It localises to the host nucleus. The protein localises to the host cytoplasm. Its function is as follows. Strong activator of the late viral genes promoters. Enhances the expression of the capsid protein and nuclear shuttle protein. Acts as a suppressor of RNA-mediated gene silencing, also known as post-transcriptional gene silencing (PTGS), a mechanism of plant viral defense that limits the accumulation of viral RNAs. Suppresses the host RNA silencing by inhibiting adenosine kinase 2 (ADK2), a kinase involved in a general methylation pathway. Also suppresses the host basal defense by interacting with and inhibiting SNF1 kinase, a key regulator of cell metabolism implicated in innate antiviral defense. Determines pathogenicity. The polypeptide is Transcriptional activator protein (Cucurbita moschata (Winter crookneck squash)).